The primary structure comprises 268 residues: Ribosomal RNA small subunit methyltransferase A (268 aa).

S-adenosyl-L-methionine-binding residues include asparagine 18, leucine 20, glycine 45, glutamate 66, aspartate 91, and asparagine 112.

It belongs to the class I-like SAM-binding methyltransferase superfamily. rRNA adenine N(6)-methyltransferase family. RsmA subfamily.

The protein localises to the cytoplasm. It carries out the reaction adenosine(1518)/adenosine(1519) in 16S rRNA + 4 S-adenosyl-L-methionine = N(6)-dimethyladenosine(1518)/N(6)-dimethyladenosine(1519) in 16S rRNA + 4 S-adenosyl-L-homocysteine + 4 H(+). In terms of biological role, specifically dimethylates two adjacent adenosines (A1518 and A1519) in the loop of a conserved hairpin near the 3'-end of 16S rRNA in the 30S particle. May play a critical role in biogenesis of 30S subunits. The protein is Ribosomal RNA small subunit methyltransferase A of Shewanella oneidensis (strain ATCC 700550 / JCM 31522 / CIP 106686 / LMG 19005 / NCIMB 14063 / MR-1).